The chain runs to 561 residues: MRHCINCCIQLFPEDAHKQQVACQGGPHHSHQACPSCKGEDKILFRVDSKQMNLLAVLEVRTEGNENWGGFLRFRKGKRCSLVFGLIIMTLVMASYILSGAHQELLISSPFHYGGFPSNPSVMDSESPSDVKEHHYQPSVNNISYVKDYPNIKLIIDSIAARNEFTTRQLPDLQDLKRQELHMFSVIPNKFLPTSKSPCWYEEFSGRNTTDPYLTNSYVLYSKRFRSTFDTLRKAFWGHLSHVHGKHFRLRCLPHFYIIGQPKCGTTDLYDRLRLHPEVKFSAIKEPHWWTRKRFGIVRLRDGLRDRYPVEDYLDLFDLAAHQIHQGLQAASAEQTSKMNRIIIGEASASTMWDNNAWTFFYDNSTDGEPPFLTQDFIHAFQPEAKLLVMLRDPVERLYSDYLYFASSNKSADDFHEKVTEALQLFENCMLDYSLRACVYNNTLNNAMPVRLQVGLYAVYLLDWLTVFSKEQFLILRLEDHASNVKYTMHKVFQFLNLGPLSEKQEALMTKSPASNTRRPEDRSLGPMWPITQKILRDFYGPFNTRLAQVLDDEAFAWKTT.

Residues 1–80 (MRHCINCCIQ…FLRFRKGKRC (80 aa)) are Cytoplasmic-facing. The helical; Signal-anchor for type II membrane protein transmembrane segment at 81–101 (SLVFGLIIMTLVMASYILSGA) threads the bilayer. Over 102–561 (HQELLISSPF…DDEAFAWKTT (460 aa)) the chain is Lumenal. 263–267 (KCGTT) provides a ligand contact to 3'-phosphoadenylyl sulfate. N364 carries N-linked (GlcNAc...) asparagine glycosylation. 2 residues coordinate 3'-phosphoadenylyl sulfate: R392 and S400.

This sequence belongs to the sulfotransferase 1 family. Homodimer; disulfide-linked (Potential). The relevance of homodimerization is however unsure. May interact with phosphorylated proteins in resting B-cells, including HCK. A divalent metal cation serves as cofactor. Glutathione is required as a cofactor. Post-translationally, glycosylated.

The protein localises to the golgi apparatus membrane. It carries out the reaction dermatan 4'-sulfate + n 3'-phosphoadenylyl sulfate = dermatan 4',6'-bissulfate + n adenosine 3',5'-bisphosphate + n H(+). It catalyses the reaction chondroitin 4'-sulfate + n 3'-phosphoadenylyl sulfate = chondroitin 4',6'-bissulfate + n adenosine 3',5'-bisphosphate + n H(+). Inhibited by phenyl beta-GalNAc(4,6-SO(4)). Its function is as follows. Sulfotransferase that transfers sulfate from 3'-phosphoadenosine 5'-phosphosulfate (PAPS) to the C-6 hydroxyl group of the GalNAc 4-sulfate residue of chondroitin sulfate A and forms chondroitin sulfate E containing GlcA-GalNAc(4,6-SO(4)) repeating units. It also transfers sulfate to a unique non-reducing terminal sequence, GalNAc(4SO4)-GlcA(2SO4)-GalNAc(6SO4), to yield a highly sulfated structure similar to the structure found in thrombomodulin chondroitin sulfate. May also act as a B-cell receptor involved in BCR ligation-mediated early activation that mediate regulatory signals key to B-cell development and/or regulation of B-cell-specific RAG expression; however such results are unclear in vivo. The protein is Carbohydrate sulfotransferase 15 (Chst15) of Rattus norvegicus (Rat).